Here is a 121-residue protein sequence, read N- to C-terminus: Putative ferredoxin (121 aa).

It to E.coli YkgJ.

This chain is Putative ferredoxin, found in Acinetobacter calcoaceticus.